Consider the following 168-residue polypeptide: Crossover junction endodeoxyribonuclease RuvC (168 aa).

Active-site residues include Asp-11, Glu-71, and Asp-144. The Mg(2+) site is built by Asp-11, Glu-71, and Asp-144.

This sequence belongs to the RuvC family. In terms of assembly, homodimer which binds Holliday junction (HJ) DNA. The HJ becomes 2-fold symmetrical on binding to RuvC with unstacked arms; it has a different conformation from HJ DNA in complex with RuvA. In the full resolvosome a probable DNA-RuvA(4)-RuvB(12)-RuvC(2) complex forms which resolves the HJ. Mg(2+) is required as a cofactor.

The protein resides in the cytoplasm. The enzyme catalyses Endonucleolytic cleavage at a junction such as a reciprocal single-stranded crossover between two homologous DNA duplexes (Holliday junction).. Its function is as follows. The RuvA-RuvB-RuvC complex processes Holliday junction (HJ) DNA during genetic recombination and DNA repair. Endonuclease that resolves HJ intermediates. Cleaves cruciform DNA by making single-stranded nicks across the HJ at symmetrical positions within the homologous arms, yielding a 5'-phosphate and a 3'-hydroxyl group; requires a central core of homology in the junction. The consensus cleavage sequence is 5'-(A/T)TT(C/G)-3'. Cleavage occurs on the 3'-side of the TT dinucleotide at the point of strand exchange. HJ branch migration catalyzed by RuvA-RuvB allows RuvC to scan DNA until it finds its consensus sequence, where it cleaves and resolves the cruciform DNA. This Protochlamydia amoebophila (strain UWE25) protein is Crossover junction endodeoxyribonuclease RuvC.